The primary structure comprises 189 residues: Ribosome maturation factor RimM (189 aa).

The PRC barrel domain occupies 95–169 (DEDEFFQTDL…IIKVEPHAAG (75 aa)). The interval 168–189 (AGLIADEHDNPPHESGKKPKKP) is disordered. The span at 172-189 (ADEHDNPPHESGKKPKKP) shows a compositional bias: basic and acidic residues.

The protein belongs to the RimM family. As to quaternary structure, binds ribosomal protein uS19.

The protein resides in the cytoplasm. Functionally, an accessory protein needed during the final step in the assembly of 30S ribosomal subunit, possibly for assembly of the head region. Essential for efficient processing of 16S rRNA. May be needed both before and after RbfA during the maturation of 16S rRNA. It has affinity for free ribosomal 30S subunits but not for 70S ribosomes. The chain is Ribosome maturation factor RimM from Brucella abortus (strain S19).